Here is a 467-residue protein sequence, read N- to C-terminus: Venom serine carboxypeptidase (467 aa).

The signal sequence occupies residues methionine 1 to glycine 18. 2 N-linked (GlcNAc...) asparagine glycosylation sites follow: asparagine 130 and asparagine 169. The active site involves serine 202. 3 N-linked (GlcNAc...) asparagine glycosylation sites follow: asparagine 304, asparagine 322, and asparagine 344. Catalysis depends on residues aspartate 387 and histidine 444.

Belongs to the peptidase S10 family. Expressed by the venom duct.

The protein resides in the secreted. The catalysed reaction is Release of a C-terminal amino acid with broad specificity.. This is Venom serine carboxypeptidase from Apis mellifera (Honeybee).